A 464-amino-acid polypeptide reads, in one-letter code: Glycine--tRNA ligase (464 aa).

Positions 104 and 175 each coordinate substrate. ATP-binding positions include 207-209 (RNE), 217-222 (FRTREF), 292-293 (EL), and 336-339 (GVNR). Substrate is bound at residue 222-226 (FEQME). A substrate-binding site is contributed by 332–336 (EPALG).

It belongs to the class-II aminoacyl-tRNA synthetase family. Homodimer.

It is found in the cytoplasm. It catalyses the reaction tRNA(Gly) + glycine + ATP = glycyl-tRNA(Gly) + AMP + diphosphate. Its function is as follows. Catalyzes the attachment of glycine to tRNA(Gly). In Leptospira interrogans serogroup Icterohaemorrhagiae serovar copenhageni (strain Fiocruz L1-130), this protein is Glycine--tRNA ligase.